We begin with the raw amino-acid sequence, 403 residues long: Phosphopentomutase (403 aa).

6 residues coordinate Mn(2+): aspartate 13, aspartate 298, histidine 303, aspartate 339, histidine 340, and histidine 351.

It belongs to the phosphopentomutase family. The cofactor is Mn(2+).

Its subcellular location is the cytoplasm. It carries out the reaction 2-deoxy-alpha-D-ribose 1-phosphate = 2-deoxy-D-ribose 5-phosphate. The catalysed reaction is alpha-D-ribose 1-phosphate = D-ribose 5-phosphate. Its pathway is carbohydrate degradation; 2-deoxy-D-ribose 1-phosphate degradation; D-glyceraldehyde 3-phosphate and acetaldehyde from 2-deoxy-alpha-D-ribose 1-phosphate: step 1/2. Functionally, isomerase that catalyzes the conversion of deoxy-ribose 1-phosphate (dRib-1-P) and ribose 1-phosphate (Rib-1-P) to deoxy-ribose 5-phosphate (dRib-5-P) and ribose 5-phosphate (Rib-5-P), respectively. This Streptococcus pneumoniae (strain Hungary19A-6) protein is Phosphopentomutase.